The chain runs to 20 residues: SPVAASYRATAGLAGKALDF.

The 20-residue stretch at 1 to 20 (SPVAASYRATAGLAGKALDF) folds into the Pentraxin (PTX) domain.

This sequence belongs to the pentraxin family. In terms of assembly, homodimer; disulfide-linked. It is not known if it assembles into a pentraxin (or pentaxin) structure. Pentraxins have a discoid arrangement of 5 non-covalently bound subunits. In terms of processing, glycosylated.

Its subcellular location is the secreted. In terms of biological role, displays several functions associated with host defense: it promotes agglutination, bacterial capsular swelling, phagocytosis, and complement fixation through its calcium-dependent binding to phosphorylcholine. This Mustelus canis (Smooth dogfish) protein is C-reactive protein.